Here is a 224-residue protein sequence, read N- to C-terminus: Cytidylate kinase (224 aa).

Residue 11 to 19 participates in ATP binding; sequence GPAAAGKST.

The protein belongs to the cytidylate kinase family. Type 1 subfamily.

The protein resides in the cytoplasm. The enzyme catalyses CMP + ATP = CDP + ADP. The catalysed reaction is dCMP + ATP = dCDP + ADP. The sequence is that of Cytidylate kinase from Listeria monocytogenes serovar 1/2a (strain ATCC BAA-679 / EGD-e).